We begin with the raw amino-acid sequence, 474 residues long: Immunoglobulin heavy constant mu (474 aa).

Positions 1–105 (GSASAPTLFP…NKEKNVPLPV (105 aa)) are CH1. At 1-450 (GSASAPTLFP…EEGFENLWAT (450 aa)) the chain is on the extracellular side. Ig-like domains lie at 6–102 (PTLF…KNVP), 111–211 (PKVS…QNAS), 229–319 (PSFA…QTIS), and 329–430 (PDVY…RTVD). Cystine bridges form between C28/C88 and C134/C197. N46 is a glycosylation site (N-linked (GlcNAc...) (complex) asparagine). The tract at residues 106–217 (IAELPPKVSV…QNASSMCVPD (112 aa)) is CH2. N209 is a glycosylation site (N-linked (GlcNAc...) (complex) asparagine). The tract at residues 218 to 323 (QDTAIRVFAI…LKQTISRPKG (106 aa)) is CH3. Cystine bridges form between C244–C303 and C351–C413. 2 N-linked (GlcNAc...) asparagine glycosylation sites follow: N272 and N279. A CH4 region spans residues 324 to 452 (VALHRPDVYL…GFENLWATAS (129 aa)). The important for IgM oligomerization stretch occupies residues 437–453 (VSADEEGFENLWATAST). D440 carries N-linked (GlcNAc...) asparagine glycosylation. Residues 451 to 471 (ASTFIVLFLLSLFYSTTVTLF) form a helical membrane-spanning segment. Residues 472–474 (KVK) lie on the Cytoplasmic side of the membrane.

In terms of assembly, the basic structural unit of both sIgM and mIgM molecules consists of two identical heavy chains and two identical light chains; disulfide-linked. N-terminal variable regions of the heavy and light chains form the antigen binding sites, whereas the C-terminal constant regions of the heavy chains interact with immune receptors to mediate effector functions. Part of IgM antibody. Forms high order oligomers, homopentamers stabilized by the JCHAIN and homohexamers that lack JCHAIN. The oligomerization amplifies an inherently low affinity of IgM antibodies for the antigen by multi-point attachment (avidity). Adjacent IgM protomers associate via interchain disulfide links to form an asymmetric pentameric structure with a 50 degree gap. A single copy of JCHAIN is covalently linked to the first and the fifth IgM monomers via interchain disulfide bonds thus closing the pentamer ring. Only JCHAIN-containing IgM binds PIGR secretory component (via D1-CDR1 region); this interaction is a prerequisite for IgM transcytosis across mucosal epithelium. Pentameric sIgM interacts (via CH4 domain) with FCRM (via Ig-like domain); the interaction is glycan-independent and multivalent theoretically involving up to eight binding sites for the IgM pentamer. Interacts with FCAMR; this interaction facilitates the endocytosis of IgM-coated microbes or IgM-antigen immune complexes. Antigen-bound IgM (via the Fc region) binds to globular domains of C1q component of the complement system, all three modules C1QA, C1QB and C1QC being involved in IgM binding; this interaction is multivalent. Pentameric sIgM (via Fc region) interacts with CD5L (via SRCR2) through interchain disulfide-linkages; this interaction protects CD5L from renal excretion and provides for high levels of CD5L in circulation. As to quaternary structure, part of IgM B cell receptor complex on pre-B cells, immature and mature B cells. The BCR complex consists of one membrane-bound IgM molecule responsible for antigen binding, non-covalently associated with CD79A and CD79B signaling chains. Post-translationally, N-glycosylated; important for IgM secretion and its localization at the plasma membrane. The interaction with FCMR is glycan-independent.

The protein localises to the secreted. The protein resides in the cell membrane. In terms of biological role, constant region of immunoglobulin heavy chains. Immunoglobulins, also known as antibodies, are membrane-bound or secreted glycoproteins produced by B lymphocytes. In the recognition phase of humoral immunity, the membrane-bound immunoglobulins serve as receptors which, upon binding of a specific antigen, trigger the clonal expansion and differentiation of B lymphocytes into immunoglobulins-secreting plasma cells. Secreted immunoglobulins mediate the effector phase of humoral immunity, which results in the elimination of bound antigens. The antigen binding site is formed by the variable domain of one heavy chain, together with that of its associated light chain. Thus, each immunoglobulin has two antigen binding sites with remarkable affinity for a particular antigen. The variable domains are assembled by a process called V-(D)-J rearrangement and can then be subjected to somatic hypermutations which, after exposure to antigen and selection, allow affinity maturation for a particular antigen. Functionally, constant region of secreted IgM (sIgM), also known as the Fc region of IgM antibody. Able to multimerize, forms high order polymers, mainly pentamers and occasionally hexamers, providing for multivalency and high avidity recognition of antigens. Natural sIgM are polyreactive and recognize conserved self- and pathogen-derived structures, whereas immune sIgM are secreted only upon exposure to pathogens and are antigen-specific. Both natural and immune sIgM are required for an efficient humoral immune response to infection. Mediates sIgM effector functions mostly via Fc receptors and the complement system. On lymphoid cells binds high-affinity Fc receptor FCMR and promotes induction of an efficient neutralizing IgG response while maintaining tolerance to self-antigens. Recruits C1q complement component to initiate the classical complement pathway, facilitating the recognition and neutralization of pathogens by the host. Together with C1q and mannose-binding lectin promotes the phagocytosis of apoptotic cells by macrophages, ensuring the clearance of potential autoimmune epitopes from tissues. Involved in mucosal immunity. It is transported by transcytosis across mucosal epithelium by PIGR and secreted on the apical side in complex with PIGR secretory component to scan mucosal lining for pathogens. IgM-antigen complexes undergo FCMR-mediated retrotranscytosis across mucosal M cells toward antigen-presenting cells in mucosal lymphoid tissues. Its function is as follows. Constant region of membrane-bound IgM, part of the B cell receptor complex (BCR). IgM BCR provides constitutive tonic signaling for B cell survival. Mediates pre-BCR signaling that regulates B cell selection and rearrangement of Ig genes via allelic exclusion. In Homo sapiens (Human), this protein is Immunoglobulin heavy constant mu.